The following is a 239-amino-acid chain: Ribonuclease PH (239 aa).

Phosphate contacts are provided by residues R87 and 125-127; that span reads GTR.

Belongs to the RNase PH family. In terms of assembly, homohexameric ring arranged as a trimer of dimers.

It carries out the reaction tRNA(n+1) + phosphate = tRNA(n) + a ribonucleoside 5'-diphosphate. Phosphorolytic 3'-5' exoribonuclease that plays an important role in tRNA 3'-end maturation. Removes nucleotide residues following the 3'-CCA terminus of tRNAs; can also add nucleotides to the ends of RNA molecules by using nucleoside diphosphates as substrates, but this may not be physiologically important. Probably plays a role in initiation of 16S rRNA degradation (leading to ribosome degradation) during starvation. The polypeptide is Ribonuclease PH (Dehalococcoides mccartyi (strain ATCC BAA-2266 / KCTC 15142 / 195) (Dehalococcoides ethenogenes (strain 195))).